A 69-amino-acid chain; its full sequence is Sec-independent protein translocase protein TatA (69 aa).

Residues 1–21 (MFPKLGMGELVVILLIVVILF) form a helical membrane-spanning segment. The tract at residues 43–69 (SFSGEDEEKPSTPGATSSDEASKAKQA) is disordered.

It belongs to the TatA/E family. The Tat system comprises two distinct complexes: a TatABC complex, containing multiple copies of TatA, TatB and TatC subunits, and a separate TatA complex, containing only TatA subunits. Substrates initially bind to the TatABC complex, which probably triggers association of the separate TatA complex to form the active translocon.

The protein resides in the cell inner membrane. Part of the twin-arginine translocation (Tat) system that transports large folded proteins containing a characteristic twin-arginine motif in their signal peptide across membranes. TatA could form the protein-conducting channel of the Tat system. This chain is Sec-independent protein translocase protein TatA, found in Anaeromyxobacter sp. (strain Fw109-5).